Reading from the N-terminus, the 429-residue chain is WRKY transcription factor 44 (429 aa).

A DNA-binding region (WRKY 1) is located at residues 159–223 (TGDRSSVDGY…YQGEHNHSKP (65 aa)). 4 residues coordinate Zn(2+): Cys190, Cys195, His218, and His220. Disordered regions lie at residues 214-279 (YQGE…RTEK) and 292-348 (AVPR…SDSL). Composition is skewed to polar residues over residues 254–275 (QDPNNNLYSPLWNNQSNDSTQN), 295–313 (RSTNSNPGTSDSGCKSSQC), and 334–345 (SEAGVSQGSVES). The segment at residues 343 to 408 (VESDSLEDGF…YEGKHNHHLL (66 aa)) is a DNA-binding region (WRKY 2). Residues Cys374, Cys379, His403, and His405 each contribute to the Zn(2+) site. Residues 410-422 (SPPSSSTLPFNSP) are compositionally biased toward low complexity. The segment at 410 to 429 (SPPSSSTLPFNSPQLSKQTI) is disordered.

This sequence belongs to the WRKY group I family. In terms of tissue distribution, leaf promordia, trichomes, atrichoblasts, fertilized eggs, seed coat.

The protein localises to the nucleus. Its function is as follows. Transcription factor. Interacts specifically with the W box (5'-(T)TGAC[CT]-3'), a frequently occurring elicitor-responsive cis-acting element. Regulates trichome development, production of mucilage and tannin in seed coats, and maybe root hair development. The polypeptide is WRKY transcription factor 44 (WRKY44) (Arabidopsis thaliana (Mouse-ear cress)).